A 128-amino-acid chain; its full sequence is uncharacterized protein (128 aa).

C10 and C13 are joined by a disulfide.

Belongs to the ArsC family.

This is an uncharacterized protein from Ureaplasma parvum serovar 3 (strain ATCC 700970).